We begin with the raw amino-acid sequence, 265 residues long: Putative hydro-lyase PST_2764 (265 aa).

The protein belongs to the D-glutamate cyclase family.

This Stutzerimonas stutzeri (strain A1501) (Pseudomonas stutzeri) protein is Putative hydro-lyase PST_2764.